The chain runs to 513 residues: MESQPVIWYCHSCSNEFQRPGNCPRCNSDFVEMVEPNTAPEDDPRAANFVNATEFNDPNAMLQNILQSLGQGVVPNVNPTDANRTANPNTNSNPNPNATNAQPNPTMFSTGQFSTEQGLPNVFFGAAAAQPGSGTPFVMPGIVNAAQIRNFFQNIMGGNAPQPEANSEQARNANTETSNPPFASAQTQGQEHRPSSPNPAEHMTGAYVNTPLNQPPSYAASTQPEFQQTTSPIFSSSSTPPPPPPRPSQPTSGESQNTNPRFPFSAQSFVFSVGPNGALHQVNTSTENPQNAQAGAIPITDLGSILERIFGSLNQPGAQQGEGEPFNPANMFSNIFNLSGNPGDYAWGARGLDDIISQLMEQAQGHNAPAPAPEDVIAKMKVQKPPKELIDEEGECTICMEMFKINDDVIQLPCKHYFHENCIKPWLRVNGTCAICRAPVDPNSQQRNNTSTDSANGHNPSNHANPSTSTTNDQGATLRNESFNAASQSNLSSEHGHSSRTPMDDFVDEEPLE.

Disordered stretches follow at residues 72–113 (GVVP…TGQF) and 155–262 (IMGG…NPRF). The segment covering 82 to 106 (ANRTANPNTNSNPNPNATNAQPNPT) has biased composition (low complexity). Polar residues-rich tracts occupy residues 164–189 (EANS…QTQG) and 210–228 (TPLN…EFQQ). Over residues 229 to 238 (TTSPIFSSSS) the composition is skewed to low complexity. Over residues 239–248 (TPPPPPPRPS) the composition is skewed to pro residues. Over residues 253-262 (GESQNTNPRF) the composition is skewed to polar residues. The RING-type; atypical zinc-finger motif lies at 396–437 (CTICMEMFKINDDVIQLPCKHYFHENCIKPWLRVNGTCAICR). The disordered stretch occupies residues 439–513 (PVDPNSQQRN…DDFVDEEPLE (75 aa)). Residues 442–493 (PNSQQRNNTSTDSANGHNPSNHANPSTSTTNDQGATLRNESFNAASQSNLSS) show a composition bias toward polar residues.

This is an uncharacterized protein from Schizosaccharomyces pombe (strain 972 / ATCC 24843) (Fission yeast).